A 334-amino-acid polypeptide reads, in one-letter code: Phospho-N-acetylmuramoyl-pentapeptide-transferase (334 aa).

9 consecutive transmembrane segments (helical) span residues 5-25, 52-72, 81-101, 116-136, 148-168, 181-200, 230-250, 256-276, and 309-329; these read VVWL…PVTI, PTMG…VLLV, GLVV…DDFI, KILG…FKLG, GISF…VLLG, GLAS…LALV, VFMG…GAVV, LLVV…IQVI, and FWLL…DFWL.

Belongs to the glycosyltransferase 4 family. MraY subfamily. Requires Mg(2+) as cofactor.

It is found in the cell membrane. It catalyses the reaction UDP-N-acetyl-alpha-D-muramoyl-L-alanyl-gamma-D-glutamyl-meso-2,6-diaminopimeloyl-D-alanyl-D-alanine + di-trans,octa-cis-undecaprenyl phosphate = di-trans,octa-cis-undecaprenyl diphospho-N-acetyl-alpha-D-muramoyl-L-alanyl-D-glutamyl-meso-2,6-diaminopimeloyl-D-alanyl-D-alanine + UMP. Its pathway is cell wall biogenesis; peptidoglycan biosynthesis. Its function is as follows. Catalyzes the initial step of the lipid cycle reactions in the biosynthesis of the cell wall peptidoglycan: transfers peptidoglycan precursor phospho-MurNAc-pentapeptide from UDP-MurNAc-pentapeptide onto the lipid carrier undecaprenyl phosphate, yielding undecaprenyl-pyrophosphoryl-MurNAc-pentapeptide, known as lipid I. The protein is Phospho-N-acetylmuramoyl-pentapeptide-transferase of Desulforamulus reducens (strain ATCC BAA-1160 / DSM 100696 / MI-1) (Desulfotomaculum reducens).